Consider the following 462-residue polypeptide: GTPase Der (462 aa).

2 EngA-type G domains span residues 9-171 (KTIA…NLNQ) and 201-372 (IQVG…ECFS). Residues 15–22 (GQPNVGKS), 62–66 (DTGGM), 123–126 (NKID), 207–214 (GRVNVGKS), 254–258 (DTAGI), and 318–321 (NKWD) each bind GTP. Residues 373-457 (KRIPTSLLNS…PLILNAKDKK (85 aa)) enclose the KH-like domain.

This sequence belongs to the TRAFAC class TrmE-Era-EngA-EngB-Septin-like GTPase superfamily. EngA (Der) GTPase family. In terms of assembly, associates with the 50S ribosomal subunit.

GTPase that plays an essential role in the late steps of ribosome biogenesis. The protein is GTPase Der of Helicobacter pylori (strain P12).